We begin with the raw amino-acid sequence, 283 residues long: Circadian clock oscillator protein KaiA (283 aa).

Residues glutamine 3–proline 133 form a psR domain, binds oxidized quinones region. The 161-residue stretch at glutamine 3–leucine 163 folds into the KaiA N-terminal domain. Positions glycine 164–arginine 172 are flexible linker. Residues aspartate 173 to arginine 281 enclose the KaiA C-terminal domain.

As to quaternary structure, homodimer. The KaiABC complex composition changes during the circadian cycle to control KaiC phosphorylation. Complexes KaiC(6), KaiA(2-4):KaiC(6), KaiB(6):KaiC(6) and KaiC(6):KaiB(6):KaiA(12) are among the most important forms, many form cooperatively. KaiA and CikA bind to the same region of the KaiB(fs) form and therefore compete.

In terms of biological role, key component of the KaiABC oscillator complex, which constitutes the main circadian regulator in cyanobacteria. Complex composition changes during the circadian cycle to control KaiC phosphorylation. KaiA stimulates KaiC autophosphorylation, while KaiB sequesters KaiA, leading to KaiC autodephosphorylation. KaiA binding to the KaiC CII domain during the subjective day yields KaiA(2-4):KaiC(6) complexes which stimulate KaiC autophosphorylation. Phospho-Ser-431 KaiC accumulation triggers binding of KaiB during the subjective night to form the KaiB(6):KaiC(6) complex, leading to changes in the output regulators CikA and SasA. KaiB(6):KaiC(6) formation exposes a site for KaiA binding on KaiB that sequesters KaiA from KaiC's CII domain, making the KaiC(6):KaiB(6):KaiA(12) complex resulting in KaiC autodephosphorylation. Complete dephosphorylation of KaiC leads to dissociation of KaiA(2):KaiB(1), completing 1 cycle of the Kai oscillator. Functionally, binds oxidized quinones via the N-terminal PsR domain, allowing it to sense redox changes and possibly mediate clock input. This chain is Circadian clock oscillator protein KaiA, found in Thermostichus vulcanus (Synechococcus vulcanus).